The sequence spans 773 residues: Tyrosine kinase receptor Cad96Ca (773 aa).

A signal peptide spans 1–48 (MVYHHHNHESRIIHCRKQLTSWRRRSLLLTIIVVTATVVSLISQEAEA). Over 49–315 (HNQNAPPILY…ITIFSLKSGT (267 aa)) the chain is Extracellular. A Cadherin domain is found at 58 to 172 (YVRERNWRIS…ENSSGYRPQT (115 aa)). Residues asparagine 126, asparagine 164, and asparagine 180 are each glycosylated (N-linked (GlcNAc...) asparagine). Residues 196–302 (SIRNGLPNSR…TPSGGHHNNS (107 aa)) form a disordered region. Pro residues predominate over residues 209-235 (WYPPVPQNNIFGPPPFGNNYPPPPPNI). A compositionally biased stretch (acidic residues) spans 243–253 (SGEEEQPDEEV). Polar residues-rich tracts occupy residues 254–283 (TPTT…STRV) and 290–302 (ETTT…HNNS). N-linked (GlcNAc...) asparagine glycosylation is found at asparagine 278, asparagine 279, asparagine 300, and asparagine 301. A helical membrane pass occupies residues 316–336 (IPIVVTVGGFFVAIAVLLAYL). Topologically, residues 337–773 (CRRRLCAISR…NIVSLSGEKL (437 aa)) are cytoplasmic. Disordered regions lie at residues 352 to 373 (KEKE…LTDD) and 411 to 447 (TGVT…AGSS). Polar residues predominate over residues 361 to 373 (SNQSQLSSTLTDD). The span at 411–433 (TGVTNGGVSSPGVPSPGTGEPGS) shows a compositional bias: low complexity. Residues 470 to 749 (LKFFNILGEG…MLDKLLHTEM (280 aa)) enclose the Protein kinase domain. ATP contacts are provided by residues 476–484 (LGEGAFGQV) and lysine 504. The Proton acceptor role is filled by aspartate 610.

Belongs to the protein kinase superfamily. Tyr protein kinase family. Fibroblast growth factor receptor subfamily.

Its subcellular location is the membrane. It catalyses the reaction L-tyrosyl-[protein] + ATP = O-phospho-L-tyrosyl-[protein] + ADP + H(+). The chain is Tyrosine kinase receptor Cad96Ca (Cad96Ca) from Drosophila melanogaster (Fruit fly).